Reading from the N-terminus, the 98-residue chain is Large ribosomal subunit protein bL27 (98 aa).

Positions 1–13 are excised as a propeptide; it reads MKKIWFHLDLQFF.

This sequence belongs to the bacterial ribosomal protein bL27 family. Post-translationally, the N-terminus is cleaved by ribosomal processing cysteine protease Prp.

This Mycoplasmoides gallisepticum (strain R(low / passage 15 / clone 2)) (Mycoplasma gallisepticum) protein is Large ribosomal subunit protein bL27.